The sequence spans 198 residues: MRLILLGPPGAGKGTQAQRLVEKHGIPQLSTGDMLRAAVQAGSEVGKRAKAVMDAGELVSDAIVNAIVAERIDQADCAKGFILDGYPRTLVQADAVESMLSERGIGLDTVIELVVDDRALVGRIVKRAEDAKAAGQPVRKDDNPAVFEERLREYYKKTAPLTGYYYAKGKLKTVDGLASIDAVTNEIEAVLTAAAEAR.

10–15 serves as a coordination point for ATP; sequence GAGKGT. Residues 30–59 form an NMP region; that stretch reads STGDMLRAAVQAGSEVGKRAKAVMDAGELV. AMP contacts are provided by residues T31, R36, 57 to 59, 85 to 88, and Q92; these read ELV and GYPR. The segment at 126–142 is LID; that stretch reads KRAEDAKAAGQPVRKDD. ATP is bound at residue R127. Residues R139 and R150 each coordinate AMP. A178 lines the ATP pocket.

The protein belongs to the adenylate kinase family. Monomer.

It localises to the cytoplasm. It catalyses the reaction AMP + ATP = 2 ADP. The protein operates within purine metabolism; AMP biosynthesis via salvage pathway; AMP from ADP: step 1/1. Its function is as follows. Catalyzes the reversible transfer of the terminal phosphate group between ATP and AMP. Plays an important role in cellular energy homeostasis and in adenine nucleotide metabolism. This is Adenylate kinase from Mesorhizobium japonicum (strain LMG 29417 / CECT 9101 / MAFF 303099) (Mesorhizobium loti (strain MAFF 303099)).